The sequence spans 334 residues: Nucleoid-associated protein PFL_1060 (334 aa).

It belongs to the YejK family.

Its subcellular location is the cytoplasm. It is found in the nucleoid. The chain is Nucleoid-associated protein PFL_1060 from Pseudomonas fluorescens (strain ATCC BAA-477 / NRRL B-23932 / Pf-5).